The primary structure comprises 249 residues: Major phosphate-irrepressible acid phosphatase (249 aa).

The first 20 residues, 1-20 (MKKNIIAGCLFSLFSLSALA), serve as a signal peptide directing secretion.

Belongs to the class A bacterial acid phosphatase family. Homotetramer.

Its subcellular location is the periplasm. The catalysed reaction is a phosphate monoester + H2O = an alcohol + phosphate. In Morganella morganii (Proteus morganii), this protein is Major phosphate-irrepressible acid phosphatase (phoC).